The sequence spans 558 residues: Polypeptide N-acetylgalactosaminyltransferase 16 (558 aa).

The Cytoplasmic portion of the chain corresponds to 1 to 6 (MRKIRA). The chain crosses the membrane as a helical; Signal-anchor for type II membrane protein span at residues 7–26 (NAIAILTVAWILGTFYYLWQ). Residues 27 to 558 (DNRAHAASSS…AQQWQLLPHT (532 aa)) are Lumenal-facing. Positions 34-46 (SSSGRGAQRAGGR) are enriched in low complexity. A disordered region spans residues 34-53 (SSSGRGAQRAGGRPEQLRED). 5 disulfide bridges follow: cysteine 113/cysteine 340, cysteine 331/cysteine 409, cysteine 441/cysteine 460, cysteine 486/cysteine 506, and cysteine 530/cysteine 543. A catalytic subdomain A region spans residues 122 to 227 (LPATSVIITF…VEWLQPMLQR (106 aa)). Aspartate 163 and arginine 188 together coordinate substrate. Aspartate 211 provides a ligand contact to Mn(2+). Residue serine 212 participates in substrate binding. Histidine 213 contacts Mn(2+). A catalytic subdomain B region spans residues 286–348 (PIRTPVIAGG…PCSRVGHVFR (63 aa)). Residue tryptophan 317 coordinates substrate. Histidine 345 serves as a coordination point for Mn(2+). Positions 348, 351, and 353 each coordinate substrate. The Ricin B-type lectin domain occupies 428–555 (KEVLPGVIKQ…DAQAQQWQLL (128 aa)).

This sequence belongs to the glycosyltransferase 2 family. GalNAc-T subfamily. Requires Mn(2+) as cofactor. In terms of tissue distribution, in the CNS, it is predominantly expressed in several distinct hypothalamic, thalamic and amygdaloid nuclei. The most abundant level of expression is in the paraventricular, ventromedial and arcuate nuclei of the hypothalamus, the anterodorsal and parafascicular nuclei of the thalamus and the central, basomedial and medial nuclei of the amygdala. Also expressed in cerebral cortex, lateral septum, habenula and hippocampus.

The protein resides in the golgi apparatus membrane. It catalyses the reaction L-seryl-[protein] + UDP-N-acetyl-alpha-D-galactosamine = a 3-O-[N-acetyl-alpha-D-galactosaminyl]-L-seryl-[protein] + UDP + H(+). The catalysed reaction is L-threonyl-[protein] + UDP-N-acetyl-alpha-D-galactosamine = a 3-O-[N-acetyl-alpha-D-galactosaminyl]-L-threonyl-[protein] + UDP + H(+). It participates in protein modification; protein glycosylation. Functionally, catalyzes the initial reaction in O-linked oligosaccharide biosynthesis, the transfer of an N-acetyl-D-galactosamine residue to a serine or threonine residue on the protein receptor. This chain is Polypeptide N-acetylgalactosaminyltransferase 16 (Galnt16), found in Mus musculus (Mouse).